The chain runs to 417 residues: NADH-quinone oxidoreductase subunit D (417 aa).

The protein belongs to the complex I 49 kDa subunit family. As to quaternary structure, NDH-1 is composed of 14 different subunits. Subunits NuoB, C, D, E, F, and G constitute the peripheral sector of the complex.

The protein resides in the cell inner membrane. It carries out the reaction a quinone + NADH + 5 H(+)(in) = a quinol + NAD(+) + 4 H(+)(out). NDH-1 shuttles electrons from NADH, via FMN and iron-sulfur (Fe-S) centers, to quinones in the respiratory chain. The immediate electron acceptor for the enzyme in this species is believed to be ubiquinone. Couples the redox reaction to proton translocation (for every two electrons transferred, four hydrogen ions are translocated across the cytoplasmic membrane), and thus conserves the redox energy in a proton gradient. The chain is NADH-quinone oxidoreductase subunit D from Acidithiobacillus ferrooxidans (strain ATCC 53993 / BNL-5-31) (Leptospirillum ferrooxidans (ATCC 53993)).